The following is a 138-amino-acid chain: Small ribosomal subunit protein uS11c (138 aa).

A disordered region spans residues 1-22; that stretch reads MAKSIPKTGSRKNVRIGSRNQT.

It belongs to the universal ribosomal protein uS11 family. Part of the 30S ribosomal subunit.

The protein localises to the plastid. It localises to the chloroplast. The polypeptide is Small ribosomal subunit protein uS11c (Phaseolus angularis (Azuki bean)).